Reading from the N-terminus, the 220-residue chain is MSDWTAFLKQELQQAYMQQTLDYVAKRRSEGVAVYPPKDQVFSAFTATQLSDIRVVILGQDPYHGEGQAHGLCFSVLPEVKKLPPSLKNIYKELASDINDFVIPTHGYLQSWAEQGVFLLNTVLTVEQGQAHSHKHLGWEQFTDKVITHINTHCEGVIFILWGAHAQKKGKGIDSARQHILAGPHPSPLSAHRGFFGCRHFSATNALLQSQGKTPINWQV.

Residue Asp61 is the Proton acceptor of the active site.

It belongs to the uracil-DNA glycosylase (UDG) superfamily. UNG family.

Its subcellular location is the cytoplasm. The enzyme catalyses Hydrolyzes single-stranded DNA or mismatched double-stranded DNA and polynucleotides, releasing free uracil.. In terms of biological role, excises uracil residues from the DNA which can arise as a result of misincorporation of dUMP residues by DNA polymerase or due to deamination of cytosine. This Pseudoalteromonas translucida (strain TAC 125) protein is Uracil-DNA glycosylase.